The following is an 80-amino-acid chain: Serine protease inhibitor Kazal-type 6 (80 aa).

An N-terminal signal peptide occupies residues 1 to 23 (MKLSGMFLLLSLALFCFLTGVFS). Pyrrolidone carboxylic acid is present on glutamine 24. The 57-residue stretch at 24-80 (QGGQVDCGEFQDPKVYCTRESNPHCGSDGQTYGNKCAFCKAIVKSGGKISLKHPGKC) folds into the Kazal-like domain. Disulfide bonds link cysteine 30–cysteine 62, cysteine 40–cysteine 59, and cysteine 48–cysteine 80.

The protein resides in the secreted. In terms of biological role, serine protease inhibitor selective for kallikreins. Efficiently inhibits KLK4, KLK5, KLK6, KLK7, KLK12, KLK13 and KLK14. Doesn't inhibit KLK8. In Homo sapiens (Human), this protein is Serine protease inhibitor Kazal-type 6 (SPINK6).